Consider the following 59-residue polypeptide: UPF0434 protein VS_2060 (59 aa).

Belongs to the UPF0434 family.

The protein is UPF0434 protein VS_2060 of Vibrio atlanticus (strain LGP32) (Vibrio splendidus (strain Mel32)).